We begin with the raw amino-acid sequence, 389 residues long: Flap endonuclease 1 (389 aa).

An N-domain region spans residues 1–105; that stretch reads MGIKGLTALM…GELAKRKDKR (105 aa). D34 provides a ligand contact to Mg(2+). Residue R71 coordinates DNA. Positions 87, 159, 161, 180, and 182 each coordinate Mg(2+). Residues 123–254 form an I-domain region; the sequence is EVEKLSKRTV…KTALKLIKEH (132 aa). A DNA-binding site is contributed by E159. DNA-binding residues include G232 and D234. D234 contacts Mg(2+). An interaction with PCNA region spans residues 338 to 346; the sequence is SQNRLESFF. A disordered region spans residues 356–389; sequence IGKRKVEEKKGKNGKAGLANKKSKGVSGFRRSKN.

The protein belongs to the XPG/RAD2 endonuclease family. FEN1 subfamily. In terms of assembly, interacts with PCNA. Three molecules of FEN1 bind to one PCNA trimer with each molecule binding to one PCNA monomer. PCNA stimulates the nuclease activity without altering cleavage specificity. It depends on Mg(2+) as a cofactor. Phosphorylated. Phosphorylation upon DNA damage induces relocalization to the nuclear plasma.

The protein resides in the nucleus. It is found in the nucleolus. The protein localises to the nucleoplasm. Its subcellular location is the mitochondrion. Structure-specific nuclease with 5'-flap endonuclease and 5'-3' exonuclease activities involved in DNA replication and repair. During DNA replication, cleaves the 5'-overhanging flap structure that is generated by displacement synthesis when DNA polymerase encounters the 5'-end of a downstream Okazaki fragment. It enters the flap from the 5'-end and then tracks to cleave the flap base, leaving a nick for ligation. Also involved in the long patch base excision repair (LP-BER) pathway, by cleaving within the apurinic/apyrimidinic (AP) site-terminated flap. Acts as a genome stabilization factor that prevents flaps from equilibrating into structures that lead to duplications and deletions. Also possesses 5'-3' exonuclease activity on nicked or gapped double-stranded DNA, and exhibits RNase H activity. Also involved in replication and repair of rDNA and in repairing mitochondrial DNA. This chain is Flap endonuclease 1, found in Ostreococcus lucimarinus (strain CCE9901).